The following is a 1045-amino-acid chain: Unconventional myosin-Ia (1045 aa).

A Myosin motor domain is found at alanine 11–glutamine 697. An ATP-binding site is contributed by glycine 104 to threonine 111. Positions valine 574 to aspartate 596 are actin-binding. IQ domains follow at residues alanine 701 to glutamine 727, methionine 723 to valine 750, and methionine 746 to alanine 774. The TH1 domain occupies lysine 861–valine 1044.

Belongs to the TRAFAC class myosin-kinesin ATPase superfamily. Myosin family. In terms of tissue distribution, intestine.

In terms of biological role, could play an important role in morphogenesis and function of intestinal microvilli. The chain is Unconventional myosin-Ia (MYO1A) from Gallus gallus (Chicken).